The sequence spans 271 residues: ATP synthase subunit a (271 aa).

The next 5 helical transmembrane spans lie at 40 to 60 (TINI…LVLF), 100 to 120 (LIAP…LMDL), 146 to 166 (DVNV…FYSI), 220 to 240 (LIFI…LNVP), and 242 to 262 (AIFH…LTIV).

This sequence belongs to the ATPase A chain family. As to quaternary structure, F-type ATPases have 2 components, CF(1) - the catalytic core - and CF(0) - the membrane proton channel. CF(1) has five subunits: alpha(3), beta(3), gamma(1), delta(1), epsilon(1). CF(0) has three main subunits: a(1), b(2) and c(9-12). The alpha and beta chains form an alternating ring which encloses part of the gamma chain. CF(1) is attached to CF(0) by a central stalk formed by the gamma and epsilon chains, while a peripheral stalk is formed by the delta and b chains.

It localises to the cell inner membrane. Functionally, key component of the proton channel; it plays a direct role in the translocation of protons across the membrane. In Shigella dysenteriae serotype 1 (strain Sd197), this protein is ATP synthase subunit a.